Reading from the N-terminus, the 472-residue chain is UDP-N-acetylmuramate--L-alanine ligase (472 aa).

122–128 (GTHGKTT) is an ATP binding site.

This sequence belongs to the MurCDEF family.

The protein resides in the cytoplasm. It catalyses the reaction UDP-N-acetyl-alpha-D-muramate + L-alanine + ATP = UDP-N-acetyl-alpha-D-muramoyl-L-alanine + ADP + phosphate + H(+). It functions in the pathway cell wall biogenesis; peptidoglycan biosynthesis. In terms of biological role, cell wall formation. The chain is UDP-N-acetylmuramate--L-alanine ligase from Thermobifida fusca (strain YX).